The chain runs to 327 residues: Tryptophan--tRNA ligase (327 aa).

ATP-binding positions include 9 to 11 (QPS) and 17 to 18 (GN). The 'HIGH' region signature appears at 10-18 (PSGTLTLGN). Residue Asp132 participates in L-tryptophan binding. ATP is bound by residues 144–146 (GDD), Ile183, and 192–196 (KMSKS). Positions 192–196 (KMSKS) match the 'KMSKS' region motif.

The protein belongs to the class-I aminoacyl-tRNA synthetase family. In terms of assembly, homodimer.

It is found in the cytoplasm. It carries out the reaction tRNA(Trp) + L-tryptophan + ATP = L-tryptophyl-tRNA(Trp) + AMP + diphosphate + H(+). Functionally, catalyzes the attachment of tryptophan to tRNA(Trp). This Oceanobacillus iheyensis (strain DSM 14371 / CIP 107618 / JCM 11309 / KCTC 3954 / HTE831) protein is Tryptophan--tRNA ligase.